The primary structure comprises 641 residues: Bifunctional protein glk (641 aa).

The tract at residues 1 to 21 (MSTGAQTKAAEASQHADGPRL) is disordered. Positions 1–340 (MSTGAQTKAA…QLSNRTGGAS (340 aa)) are glucokinase. Residue 23-28 (ADVGGT) participates in ATP binding. Residues 341 to 417 (SAVFERIRQM…LKLATGLTGT (77 aa)) enclose the HTH rpiR-type domain. The putative HTH-type transcriptional regulator stretch occupies residues 341–641 (SAVFERIRQM…SHGAAPAAKE (301 aa)). The H-T-H motif DNA-binding region spans 377 to 396 (IVDIARKADVSQPTVIRFCR). An SIS domain is found at 461 to 600 (AIDILNNARR…AVGVAIRRAS (140 aa)). Residues 576 to 596 (SMISRILHLVMIDILAVGVAI) traverse the membrane as a helical segment.

In the N-terminal section; belongs to the bacterial glucokinase family.

It is found in the membrane. The catalysed reaction is D-glucose + ATP = D-glucose 6-phosphate + ADP + H(+). This chain is Bifunctional protein glk (glk), found in Burkholderia thailandensis (strain ATCC 700388 / DSM 13276 / CCUG 48851 / CIP 106301 / E264).